The chain runs to 153 residues: Subtilisin propeptide-like protein (153 aa).

Residues 1–27 form the signal peptide; that stretch reads MKFLFAFNFFSLYIYLYEFLCIHLCGS. The interval 127–153 is dispensable for parasite growth in host erythrocytes; that stretch reads QISHLSEFIQYLLNKNVCIEFNQNVML.

The protein localises to the secreted. Its subcellular location is the parasitophorous vacuole lumen. The protein resides in the cell membrane. In terms of biological role, acts as a specific inhibitor of subtilisin-like protease SUB1. The polypeptide is Subtilisin propeptide-like protein (Plasmodium falciparum (isolate 3D7)).